We begin with the raw amino-acid sequence, 428 residues long: Somatostatin receptor type 3 (428 aa).

The span at methionine 1–threonine 12 shows a compositional bias: polar residues. The segment at methionine 1–serine 20 is disordered. Residues methionine 1–glycine 45 are Extracellular-facing. Asparagine 18 and asparagine 31 each carry an N-linked (GlcNAc...) asparagine glycan. The chain crosses the membrane as a helical span at residues isoleucine 46 to leucine 71. Residues arginine 72–serine 81 lie on the Cytoplasmic side of the membrane. Residues valine 82–alanine 103 form a helical membrane-spanning segment. Over glutamine 104–arginine 118 the chain is Extracellular. A disulfide bridge links cysteine 117 with cysteine 192. A helical membrane pass occupies residues leucine 119–valine 140. Residues aspartate 141–arginine 162 are Cytoplasmic-facing. Residues threonine 163–phenylalanine 182 traverse the membrane as a helical segment. Over serine 183 to alanine 206 the chain is Extracellular. Residues phenylalanine 207–valine 232 traverse the membrane as a helical segment. Residues lysine 233 to arginine 266 are Cytoplasmic-facing. The helical transmembrane segment at methionine 267–valine 288 threads the bilayer. The Extracellular segment spans residues asparagine 289–glycine 302. A helical transmembrane segment spans residues leucine 303–leucine 325. Topologically, residues serine 326 to leucine 428 are cytoplasmic. Residues serine 341, serine 346, and serine 351 each carry the phosphoserine modification. Residues isoleucine 344 to leucine 428 form a disordered region. Threonine 357 carries the phosphothreonine modification. A compositionally biased stretch (acidic residues) spans threonine 357–glutamate 370. A compositionally biased stretch (polar residues) spans arginine 385–leucine 412.

Belongs to the G-protein coupled receptor 1 family. As to quaternary structure, homodimer and heterodimer with SSTR2. Heterodimerization with SSTR2 inactivates SSTR3 receptor function. Post-translationally, phosphorylated. Phosphorylation increases upon somatostatin binding. In the brain, primarily observed in the forebrain. Moderate levels found throughout laminae 2-6 of the neocortex and allocortex, and high levels in lamina 2 of the piriform and entorhinal cortices. High levels also present in the cornu ammonis fields of the hippocampus. In the amygdala, highly expressed in the nucleus of the lateral olfactory tract with expression also detected in the rostral portions of the basal magnocellular and lateral nuclei. In the diencephalon, moderate levels observed in the ventromedial and arcuate nuclei of the hypothalamus. In the midbrain, moderate levels found in the lateral portion of the substantia nigra pars reticulata.

The protein localises to the cell membrane. Receptor for somatostatin-14 and -28. This receptor is coupled via pertussis toxin sensitive G proteins to inhibition of adenylyl cyclase. This chain is Somatostatin receptor type 3 (Sstr3), found in Mus musculus (Mouse).